Reading from the N-terminus, the 168-residue chain is MKSNDKVIIGRLARPYGLRGWIKVVSFTHPIDNLLNHPTWQIQHNNEWQPLKLQAGKLHEPFLVVKLENIDDPETAKHYTNDLIAIERGALGALKEGDYYWTDLIGLAVVNTHGIELGTVDSLIETGSNDVLVVRSKERERLIPYTSYTIQSIDLEKKIIVVEWDADF.

The PRC barrel domain maps to 95–168; it reads KEGDYYWTDL…IIVVEWDADF (74 aa).

It belongs to the RimM family. Binds ribosomal protein uS19.

The protein localises to the cytoplasm. Its function is as follows. An accessory protein needed during the final step in the assembly of 30S ribosomal subunit, possibly for assembly of the head region. Essential for efficient processing of 16S rRNA. May be needed both before and after RbfA during the maturation of 16S rRNA. It has affinity for free ribosomal 30S subunits but not for 70S ribosomes. The chain is Ribosome maturation factor RimM from Coxiella burnetii (strain CbuK_Q154) (Coxiella burnetii (strain Q154)).